The sequence spans 404 residues: Deoxyguanosinetriphosphate triphosphohydrolase-like protein (404 aa).

Residues 1–33 (MSVGMAAPRAAFSCDPDRSRGRQFAEPPSSNRS) are disordered. Positions 69–217 (RLTHSLEVAQ…AALADDIAYD (149 aa)) constitute an HD domain.

The protein belongs to the dGTPase family. Type 2 subfamily.

The chain is Deoxyguanosinetriphosphate triphosphohydrolase-like protein from Rhodopseudomonas palustris (strain HaA2).